The primary structure comprises 337 residues: Phenylalanine--tRNA ligase alpha subunit (337 aa).

Position 252 (E252) interacts with Mg(2+).

It belongs to the class-II aminoacyl-tRNA synthetase family. Phe-tRNA synthetase alpha subunit type 1 subfamily. As to quaternary structure, tetramer of two alpha and two beta subunits. Requires Mg(2+) as cofactor.

Its subcellular location is the cytoplasm. It catalyses the reaction tRNA(Phe) + L-phenylalanine + ATP = L-phenylalanyl-tRNA(Phe) + AMP + diphosphate + H(+). This Francisella tularensis subsp. mediasiatica (strain FSC147) protein is Phenylalanine--tRNA ligase alpha subunit.